Reading from the N-terminus, the 469-residue chain is MSSSAAALAWRRSLRDALLRGSAWRGAPAANSAAARLASTASASEAAAGPKKVPPPPRKGRLLTGAMIGLAIAGGAYVSTADEAKFCGWLFKSTQLVNPLFALLDAEFAHRLAVTAASHGFVPREKRPDPSVLGLEIWGRKFTNPIGLAAGFDKNAEAVEGLLGMGFGFVEVGSVTPLPQEGNPKPRIFRLREHGAVINRCGFNSEGIVVVAKRLGAQHGKRKMEETSSSTSPTTSDVKQGGKAGPGILGVNLGKNKISEDATADYVQGVHTLSQYADYLVINVSSPNTPGLRKLQGRKQLKDLVKKVQAARDEMQWAEDGPPPLLVKIAPDLSKQDLEDIAAVALALRLDGLIISNTTISRPSPADTHPLAQEAGGLSGKPLFDLSTNVLREMYILTRGKIPLIGCGGVSSGEDAYKKIRSGATLVQLYTAFAYGGPALIPRIKAELAECLERDGFKSVQEAVGADFK.

A mitochondrion-targeting transit peptide spans 1–37 (MSSSAAALAWRRSLRDALLRGSAWRGAPAANSAAARL). Residues 62–82 (LLTGAMIGLAIAGGAYVSTAD) traverse the membrane as a helical segment. FMN contacts are provided by residues 150-154 (AGFDK) and Ser-174. Position 154 (Lys-154) interacts with substrate. Substrate is bound at residue 199 to 203 (NRCGF). The segment at 219 to 247 (HGKRKMEETSSSTSPTTSDVKQGGKAGPG) is disordered. The segment covering 227–236 (TSSSTSPTTS) has biased composition (low complexity). FMN-binding residues include Asn-252 and Asn-283. Residue 283–288 (NVSSPN) coordinates substrate. The active-site Nucleophile is Ser-286. FMN is bound by residues Lys-328 and Ser-356. 357 to 358 (NT) contacts substrate. FMN contacts are provided by residues Gly-380, Gly-409, and 430–431 (YT).

Belongs to the dihydroorotate dehydrogenase family. Type 2 subfamily. FMN is required as a cofactor.

The protein localises to the mitochondrion inner membrane. It catalyses the reaction (S)-dihydroorotate + a quinone = orotate + a quinol. The protein operates within pyrimidine metabolism; UMP biosynthesis via de novo pathway; orotate from (S)-dihydroorotate (quinone route): step 1/1. Functionally, catalyzes the conversion of dihydroorotate to orotate with quinone as electron acceptor. In Oryza sativa subsp. japonica (Rice), this protein is Dihydroorotate dehydrogenase (quinone), mitochondrial (PYRD).